The following is a 147-amino-acid chain: Hemoglobin subunit beta (147 aa).

Residues 3–147 enclose the Globin domain; that stretch reads HWTAEEKQLI…VAHALARKYH (145 aa). Heme b-binding residues include H64 and H93.

The protein belongs to the globin family. As to quaternary structure, heterotetramer of two alpha chains and two beta chains. In terms of tissue distribution, red blood cells.

Its function is as follows. Involved in oxygen transport from the lung to the various peripheral tissues. The protein is Hemoglobin subunit beta (HBB) of Cairina moschata (Muscovy duck).